We begin with the raw amino-acid sequence, 545 residues long: Sensory neuron membrane protein 1 (545 aa).

Over 1–10 the chain is Cytoplasmic; it reads MELKERNFKK. Residues 11-31 traverse the membrane as a helical segment; the sequence is IGLICVAVLLCGMVFSYGIFP. At 32–464 the chain is on the extracellular side; the sequence is SILRFMIKQN…LFLGLKFNAT (433 aa). N-linked (GlcNAc...) asparagine glycans are attached at residues Asn-69, Asn-214, and Asn-227. 3 cysteine pairs are disulfide-bonded: Cys-266–Cys-331, Cys-295–Cys-351, and Cys-333–Cys-340. Residues Asn-444 and Asn-462 are each glycosylated (N-linked (GlcNAc...) asparagine). The chain crosses the membrane as a helical span at residues 465 to 485; it reads VKWLTIIIGTVGAVGSAYMYF. Residues 486-545 are Cytoplasmic-facing; that stretch reads RKETKTTDVAPVDVSTPDTNPSSAKDGVVNVSLGRNLPPVIDGLDKPPKLRATELQQERY.

The protein belongs to the CD36 family. As to expression, selectively expressed in antenna.

It localises to the cell membrane. In terms of biological role, plays an olfactory role that is not restricted to pheromone sensitivity. This is Sensory neuron membrane protein 1 (snmp1) from Anopheles gambiae (African malaria mosquito).